The primary structure comprises 411 residues: Imidazolonepropionase (411 aa).

Residues His75 and His77 each contribute to the Fe(3+) site. The Zn(2+) site is built by His75 and His77. 4-imidazolone-5-propanoate is bound by residues Arg84, Tyr147, and His180. An N-formimidoyl-L-glutamate-binding site is contributed by Tyr147. Residue His245 coordinates Fe(3+). His245 is a Zn(2+) binding site. Residue Gln248 participates in 4-imidazolone-5-propanoate binding. A Fe(3+)-binding site is contributed by Asp320. Asp320 is a Zn(2+) binding site. Asn322 and Gly324 together coordinate N-formimidoyl-L-glutamate. 4-imidazolone-5-propanoate is bound at residue Thr325.

The protein belongs to the metallo-dependent hydrolases superfamily. HutI family. Zn(2+) is required as a cofactor. Fe(3+) serves as cofactor.

Its subcellular location is the cytoplasm. The enzyme catalyses 4-imidazolone-5-propanoate + H2O = N-formimidoyl-L-glutamate. Its pathway is amino-acid degradation; L-histidine degradation into L-glutamate; N-formimidoyl-L-glutamate from L-histidine: step 3/3. Catalyzes the hydrolytic cleavage of the carbon-nitrogen bond in imidazolone-5-propanoate to yield N-formimidoyl-L-glutamate. It is the third step in the universal histidine degradation pathway. The protein is Imidazolonepropionase of Aeromonas salmonicida (strain A449).